We begin with the raw amino-acid sequence, 554 residues long: Phosphoglucomutase (554 aa).

Arg21 is a binding site for alpha-D-glucose 1,6-bisphosphate. At Thr111 the chain carries Phosphothreonine. Alpha-D-glucose 1,6-bisphosphate is bound at residue Ser113. Catalysis depends on Ser113, which acts as the Phosphoserine intermediate. Mg(2+) contacts are provided by Ser113, Asp278, Asp280, and Asp282. Ser113 is subject to Phosphoserine. Asp282, Arg283, Thr346, Glu365, Ser367, and Lys378 together coordinate alpha-D-glucose 1,6-bisphosphate.

It belongs to the phosphohexose mutase family. As to quaternary structure, monomer. It depends on Mg(2+) as a cofactor.

The protein localises to the cytoplasm. It localises to the nucleus. The catalysed reaction is alpha-D-glucose 1-phosphate = alpha-D-glucose 6-phosphate. It carries out the reaction O-phospho-L-seryl-[protein] + alpha-D-glucose 1-phosphate = alpha-D-glucose 1,6-bisphosphate + L-seryl-[protein]. It catalyses the reaction alpha-D-glucose 1,6-bisphosphate + L-seryl-[protein] = O-phospho-L-seryl-[protein] + alpha-D-glucose 6-phosphate. Catalyzes the reversible isomerization of alpha-D-glucose 1-phosphate to alpha-D-glucose 6-phosphate. The mechanism proceeds via the intermediate compound alpha-D-glucose 1,6-bisphosphate. Key enzyme in hexose metabolism. The reverse reaction is an essential step for biosynthesis because glucose 1-phosphate is the starting point for the synthesis of UDP-glucose, which acts as a precursor for the synthesis of oligosaccharides and trehalose. This is Phosphoglucomutase from Schizosaccharomyces pombe (strain 972 / ATCC 24843) (Fission yeast).